The following is a 359-amino-acid chain: Acetoin catabolism protein X (359 aa).

It localises to the cell membrane. It functions in the pathway ketone degradation; acetoin degradation. Its function is as follows. Essential for acetoin catabolism. The protein is Acetoin catabolism protein X (acoX) of Cupriavidus necator (strain ATCC 17699 / DSM 428 / KCTC 22496 / NCIMB 10442 / H16 / Stanier 337) (Ralstonia eutropha).